A 247-amino-acid polypeptide reads, in one-letter code: uncharacterized protein (247 aa).

The first 35 residues, 1-35 (MWGPGVTAEGLSVAPAPPPLLPLLLLLALALVAPS), serve as a signal peptide directing secretion. A helical membrane pass occupies residues 82 to 102 (LSGLLILLVLFAIGYFLQRII). The segment at 109 to 176 (YPRGQARPGQ…RGSGGRLPPS (68 aa)) is disordered. Residues 111–120 (RGQARPGQAR) show a composition bias toward low complexity. Positions 161–171 (SGGGRGRGSGG) are enriched in gly residues.

Its subcellular location is the membrane. This is an uncharacterized protein from Mus musculus (Mouse).